A 2016-amino-acid polypeptide reads, in one-letter code: Sodium channel protein type 5 subunit alpha (2016 aa).

Residues 1–129 (MANFLLPRGT…IRRAAVKILV (129 aa)) are Cytoplasmic-facing. The segment at 28–56 (MAEKQARGSTTLQESREGLPEEEAPRPQL) is disordered. S36 carries the phosphoserine modification. The residue at position 38 (T38) is a Phosphothreonine. Positions 41-52 (ESREGLPEEEAP) are enriched in basic and acidic residues. One copy of the I repeat lies at 113–420 (VLSPFHPIRR…VVAMAYEEQN (308 aa)). The helical transmembrane segment at 130–149 (HSLFNMLIMCTILTNCVFMA) threads the bilayer. Residues 150 to 157 (QHDPPPWT) lie on the Extracellular side of the membrane. Residues 158-179 (KYVEYTFTAIYTFESLVKILAR) traverse the membrane as a helical segment. At 180 to 188 (GFCLHAFTF) the chain is on the cytoplasmic side. The chain crosses the membrane as a helical span at residues 189 to 209 (LRDPWNWLDFSVIIMAYTTEF). Topologically, residues 210–216 (VDLGNVS) are extracellular. N214 carries an N-linked (GlcNAc...) asparagine glycan. A helical membrane pass occupies residues 217–236 (ALRTFRVLRALKTISVISGL). The Cytoplasmic segment spans residues 237-249 (KTIVGALIQSVKK). Residues 250 to 272 (LADVMVLTVFCLSVFALIGLQLF) form a helical membrane-spanning segment. Over 273 to 357 (MGNLRHKCVR…PDHGYTSFDS (85 aa)) the chain is Extracellular. C280 and C335 are oxidised to a cystine. N-linked (GlcNAc...) asparagine glycans are attached at residues N283, N288, N291, N318, and N328. The pore-forming intramembrane region spans 358-378 (FAWAFLALFRLMTQDCWERLY). Topologically, residues 379 to 386 (QQTLRSAG) are extracellular. Residues 387 to 413 (KIYMIFFMLVIFLGSFYLVNLILAVVA) traverse the membrane as a helical segment. The Cytoplasmic segment spans residues 414–719 (MAYEEQNQAT…VKLVVMDPFT (306 aa)). 4 positions are modified to phosphoserine: S457, S460, S483, and S484. Residues 461 to 591 (LEMSPLAPVN…APGHALHGKK (131 aa)) form a disordered region. T486 is subject to Phosphothreonine. The segment covering 491 to 503 (EDRLPKSDSEDGP) has biased composition (basic and acidic residues). Phosphoserine is present on residues S497 and S510. A compositionally biased stretch (polar residues) spans 509 to 528 (LSLTRGLSRTSMKPRSSRGS). Dimethylated arginine; alternate occurs at positions 513 and 526. Omega-N-methylarginine; alternate is present on residues R513 and R526. 4 positions are modified to phosphoserine: S539, S571, S664, and S667. The span at 570-580 (TSAQGQPSPGT) shows a compositional bias: polar residues. R680 bears the Dimethylated arginine; alternate mark. R680 bears the Omega-N-methylarginine; alternate mark. One copy of the II repeat lies at 699–969 (CCPLWMSIKQ…QLALARIQRG (271 aa)). The chain crosses the membrane as a helical span at residues 720–737 (DLTITMCIVLNTLFMALE). Topologically, residues 738-746 (HYNMTSEFE) are extracellular. N740 carries N-linked (GlcNAc...) asparagine glycosylation. The helical transmembrane segment at 747 to 769 (EMLQVGNLVFTGIFTAEMTFKII) threads the bilayer. Topologically, residues 770–775 (ALDPYY) are cytoplasmic. The helical transmembrane segment at 776–796 (YFQQGWNIFDSIIVILSLMEL) threads the bilayer. The Extracellular segment spans residues 797 to 806 (GLSRMSNLSV). An N-linked (GlcNAc...) asparagine glycan is attached at N803. The chain crosses the membrane as a helical span at residues 807–821 (LRSFRLLRVFKLAKS). The Cytoplasmic segment spans residues 822-838 (WPTLNTLIKIIGNSVGA). The chain crosses the membrane as a helical span at residues 839–860 (LGNLTLVLAIIVFIFAVVGMQL). At 861 to 884 (FGKNYSELRDSDSGLLPRWHMMDF) the chain is on the extracellular side. The N-linked (GlcNAc...) asparagine glycan is linked to N864. The segment at residues 885-903 (FHAFLIIFRILCGEWIETM) is an intramembrane region (pore-forming). The Extracellular portion of the chain corresponds to 904–912 (WDCMEVSGQ). A disulfide bridge links C906 with C915. Residues 913 to 941 (SLCLLVFLLVMVIGNLVVLNLFLALLLSS) form a helical membrane-spanning segment. Topologically, residues 942–1203 (FSADNLTAPD…LRKTCYHIVE (262 aa)) are cytoplasmic. A disordered region spans residues 1005-1141 (IATPYSPPPP…PEDSCSEGST (137 aa)). Basic and acidic residues predominate over residues 1015 to 1030 (ETEKVPPTRKETRFEE). A compositionally biased stretch (low complexity) spans 1033-1044 (QPGQGTPGDPEP). Residues 1054-1071 (SDTDDQEEDEENSLGTEE) show a composition bias toward acidic residues. A compositionally biased stretch (low complexity) spans 1096-1113 (SQVSATASSEAEASASQA). The III repeat unit spans residues 1187–1501 (PGKVWWRLRK…KKYYNAMKKL (315 aa)). Residues 1204–1225 (HSWFETFIIFMILLSSGALAFE) form a helical membrane-spanning segment. The Extracellular segment spans residues 1226–1236 (DIYLEERKTIK). The helical transmembrane segment at 1237 to 1259 (VLLEYADKMFTYVFVLEMLLKWV) threads the bilayer. The Cytoplasmic portion of the chain corresponds to 1260 to 1268 (AYGFKKYFT). Residues 1269-1291 (NAWCWLDFLIVDVSLVSLVANTL) traverse the membrane as a helical segment. Residues 1292–1297 (GFAEMG) are Extracellular-facing. The chain crosses the membrane as a helical span at residues 1298 to 1317 (PIKSLRTLRALRPLRALSRF). The Cytoplasmic segment spans residues 1318–1330 (EGMRVVVNALVGA). A helical membrane pass occupies residues 1331-1355 (IPSIMNVLLVCLIFWLIFSIMGVNL). Topologically, residues 1356 to 1400 (FAGKFGRCINQTEGDLPLNYTIVNNKSQCESLNLTGELYWTKVKV) are extracellular. 4 N-linked (GlcNAc...) asparagine glycosylation sites follow: N1365, N1374, N1380, and N1388. Positions 1401–1422 (NFDNVGAGYLALLQVATFKGWM) form an intramembrane region, pore-forming. Residues 1423–1445 (DIMYAAVDSRGYEEQPQWEYNLY) are Extracellular-facing. Residues 1446–1470 (MYIYFVIFIIFGSFFTLNLFIGVII) traverse the membrane as a helical segment. At 1471 to 1528 (DNFNQQKKKLGGQDIFMTEEQKKYYNAMKKLGSKKPQKPIPRPLNKYQGFIFDIVTKQ) the chain is on the cytoplasmic side. At S1503 the chain carries Phosphoserine; by PKC. The IV repeat unit spans residues 1510–1807 (IPRPLNKYQG…WEKFDPEATQ (298 aa)). The helical transmembrane segment at 1529–1547 (AFDVTIMFLICLNMVTMMV) threads the bilayer. At 1548-1558 (ETDDQSPEKIN) the chain is on the extracellular side. Residues 1559–1580 (ILAKINLLFVAIFTGECIVKLA) traverse the membrane as a helical segment. Topologically, residues 1581–1589 (ALRHYYFTN) are cytoplasmic. The chain crosses the membrane as a helical span at residues 1590 to 1612 (SWNIFDFVVVILSIVGTVLSDII). At 1613-1619 (QKYFFSP) the chain is on the extracellular side. A helical transmembrane segment spans residues 1620–1640 (TLFRVIRLARIGRILRLIRGA). At 1641-1650 (KGIRTLLFAL) the chain is on the cytoplasmic side. A helical transmembrane segment spans residues 1651-1679 (MMSLPALFNIGLLLFLVMFIYSIFGMANF). Topologically, residues 1680-1697 (AYVKWEAGIDDMFNFQTF) are extracellular. Positions 1698–1714 (ANSMLCLFQITTSAGWD) form an intramembrane region, pore-forming. Over 1715-1745 (GLLSPILNTGPPYCDPTLPNSNGSRGDCGSP) the chain is Extracellular. N-linked (GlcNAc...) asparagine glycosylation occurs at N1736. A helical transmembrane segment spans residues 1746-1771 (AVGILFFTTYIIISFLIVVNMYIAII). Over 1772–2016 (LENFSVATEE…SPDRDRESIV (245 aa)) the chain is Cytoplasmic. Residues 1839-1901 (DLPMVSGDRI…ITTTLRRKHE (63 aa)) are interaction with FGF13. In terms of domain architecture, IQ spans 1901–1930 (EEVSAMVIQRAFRRHLLQRSLKHASFLFRQ). Over residues 1959–1979 (PLGPPSSSSISSTSFPPSYDS) the composition is skewed to low complexity. Residues 1959–2016 (PLGPPSSSSISSTSFPPSYDSVTRATSDNLQVRGSDYSHSEDLADFPPSPDRDRESIV) form a disordered region. The interaction with NEDD4, NEDD4L and WWP2 stretch occupies residues 1974 to 1977 (PPSY). The segment covering 1981 to 1990 (TRATSDNLQV) has biased composition (polar residues).

The protein belongs to the sodium channel (TC 1.A.1.10) family. Nav1.5/SCN5A subfamily. Cannot form the same regulatory interactions with beta subunits as other Navs do. Interacts with the PDZ domain of the syntrophin SNTA1, SNTB1 and SNTB2. Interacts with NEDD4, NEDD4L, WWP2 and GPD1L. Interacts with CALM. Interacts with FGF13; the interaction is direct and FGF13 may regulate SNC5A density at membranes and function. May also interact with FGF12 and FGF14. Interacts with TMEM233. Interacts with the spider Jingzhaotoxin-I (AC P83974, AC B1P1B7, AC B1P1B8). Interacts with ANK3. Interacts with PKP2 (via N-terminus). Interacts with XIRP2; the interaction is required for normal action potential configuration in the heart. In terms of processing, ubiquitinated by NEDD4L; which promotes its endocytosis. Does not seem to be ubiquitinated by NEDD4 or WWP2. Post-translationally, phosphorylation at Ser-1503 by PKC in a highly conserved cytoplasmic loop slows inactivation of the sodium channel and reduces peak sodium currents. Regulated through phosphorylation by CaMK2D. Lacks the cysteine which covalently binds the conotoxin GVIIJ. This cysteine (position 868) is speculated in other sodium channel subunits alpha to be implied in covalent binding with the sodium channel subunit beta-2 or beta-4. In terms of processing, N-glycosylated at Asn-318, probably hinders potential interaction with regulatory subunits. Found in jejunal circular smooth muscle cells (at protein level). Expressed in human atrial and ventricular cardiac muscle but not in adult skeletal muscle, brain, myometrium, liver, or spleen. Isoform 4 is expressed in brain.

It localises to the cell membrane. Its subcellular location is the cytoplasm. The protein localises to the perinuclear region. The protein resides in the sarcolemma. It is found in the T-tubule. It localises to the cell junction. It catalyses the reaction Na(+)(in) = Na(+)(out). Channel inactivation is regulated by intracellular calcium levels. It is a tetrodotoxin-resistant voltage-gated Na(+) channel (Nav). Its function is as follows. Pore-forming subunit of Nav1.5, a voltage-gated sodium (Nav) channel that directly mediates the depolarizing phase of action potentials in excitable membranes. Navs, also called VGSCs (voltage-gated sodium channels) or VDSCs (voltage-dependent sodium channels), operate by switching between closed and open conformations depending on the voltage difference across the membrane. In the open conformation they allow Na(+) ions to selectively pass through the pore, along their electrochemical gradient. The influx of Na(+) ions provokes membrane depolarization, initiating the propagation of electrical signals throughout cells and tissues. Nav1.5 is the predominant sodium channel expressed in myocardial cells and it is responsible for the initial upstroke of the action potential in cardiac myocytes, thereby initiating the heartbeat. Required for normal electrical conduction including formation of the infranodal ventricular conduction system and normal action potential configuration, as a result of its interaction with XIRP2. In Homo sapiens (Human), this protein is Sodium channel protein type 5 subunit alpha.